The primary structure comprises 85 residues: V-type proton ATPase subunit f (85 aa).

A run of 2 helical transmembrane segments spans residues 13 to 33 (CTGL…LFSI) and 56 to 76 (CLGA…QVIV).

V-ATPase is a heteromultimeric enzyme composed of a peripheral catalytic V1 complex (components A to H) attached to an integral membrane V0 proton pore complex (components: a, c, c', c'', d, e, f and VOA1).

The protein localises to the endoplasmic reticulum membrane. Accessory component of the V0 complex of vacuolar(H+)-ATPase (V-ATPase), a multisubunit enzyme composed of a peripheral complex (V1) that hydrolyzes ATP and a membrane integral complex (V0) that translocates protons. V-ATPase is responsible for acidifying and maintaining the pH of intracellular compartments. The protein is V-type proton ATPase subunit f of Schizosaccharomyces pombe (strain 972 / ATCC 24843) (Fission yeast).